Consider the following 252-residue polypeptide: Metalloprotease LoiP (252 aa).

An N-terminal signal peptide occupies residues 1–18 (MKIRALLVAMSVATVLTG). Cys-19 carries the N-palmitoyl cysteine lipid modification. Residue Cys-19 is the site of S-diacylglycerol cysteine attachment. The cysteines at positions 53 and 108 are disulfide-linked. Position 130 (His-130) interacts with Zn(2+). Glu-131 is a catalytic residue. Residues His-134 and Glu-189 each coordinate Zn(2+). The tract at residues 224 to 252 (RQSSMFDDHPASAERAQHIRDRMSADGIK) is disordered.

This sequence belongs to the peptidase M48B family. Interacts with Era and BepA. Zn(2+) is required as a cofactor. The intramolecular disulfide bond improves the stability and the activity of LoiP. It forms even in the absence of the oxido-reductase DsbA.

The protein resides in the cell outer membrane. Metalloprotease that cleaves substrates preferentially between Phe-Phe residues. Plays a role in response to some stress conditions. Seems to regulate the expression of speB. This is Metalloprotease LoiP (loiP) from Escherichia coli (strain K12).